The following is a 394-amino-acid chain: Elongation factor Tu (394 aa).

Positions 10 to 204 (KPHVNVGTIG…HLDNYIPEPE (195 aa)) constitute a tr-type G domain. The G1 stretch occupies residues 19–26 (GHVDHGKT). 19–26 (GHVDHGKT) is a binding site for GTP. A Mg(2+)-binding site is contributed by Thr26. The interval 60–64 (GITIN) is G2. Residues 81 to 84 (DCPG) are G3. GTP is bound by residues 81 to 85 (DCPGH) and 136 to 139 (NKCD). The tract at residues 136–139 (NKCD) is G4. A G5 region spans residues 174–176 (SAL).

The protein belongs to the TRAFAC class translation factor GTPase superfamily. Classic translation factor GTPase family. EF-Tu/EF-1A subfamily. Monomer.

The protein resides in the cytoplasm. The enzyme catalyses GTP + H2O = GDP + phosphate + H(+). Its function is as follows. GTP hydrolase that promotes the GTP-dependent binding of aminoacyl-tRNA to the A-site of ribosomes during protein biosynthesis. In Histophilus somni (strain 129Pt) (Haemophilus somnus), this protein is Elongation factor Tu.